The following is a 309-amino-acid chain: Acetyl-coenzyme A carboxylase carboxyl transferase subunit beta (309 aa).

In terms of domain architecture, CoA carboxyltransferase N-terminal spans 27–296; sequence LWKKCPKCGA…PGTEAPIEFE (270 aa). Zn(2+) contacts are provided by C31, C34, C50, and C53. The C4-type zinc finger occupies 31–53; sequence CPKCGAFLYKPELEKNLDVCPKC. The segment at 288–309 is disordered; it reads GTEAPIEFEVTEKPDVDEPEGQ.

This sequence belongs to the AccD/PCCB family. In terms of assembly, acetyl-CoA carboxylase is a heterohexamer composed of biotin carboxyl carrier protein (AccB), biotin carboxylase (AccC) and two subunits each of ACCase subunit alpha (AccA) and ACCase subunit beta (AccD). Zn(2+) serves as cofactor.

Its subcellular location is the cytoplasm. It catalyses the reaction N(6)-carboxybiotinyl-L-lysyl-[protein] + acetyl-CoA = N(6)-biotinyl-L-lysyl-[protein] + malonyl-CoA. The protein operates within lipid metabolism; malonyl-CoA biosynthesis; malonyl-CoA from acetyl-CoA: step 1/1. Its function is as follows. Component of the acetyl coenzyme A carboxylase (ACC) complex. Biotin carboxylase (BC) catalyzes the carboxylation of biotin on its carrier protein (BCCP) and then the CO(2) group is transferred by the transcarboxylase to acetyl-CoA to form malonyl-CoA. The chain is Acetyl-coenzyme A carboxylase carboxyl transferase subunit beta from Marinobacter nauticus (strain ATCC 700491 / DSM 11845 / VT8) (Marinobacter aquaeolei).